Consider the following 260-residue polypeptide: Adenosylcobinamide-GDP ribazoletransferase (260 aa).

Helical transmembrane passes span 7 to 27 (WYFLWGGDSVGAAILFYTRLP), 45 to 65 (LMGLLLSLILLALDRGLHWLG), 117 to 137 (AYGVMAIAVVLLLKTFALASF), 145 to 165 (WALIMALGWGRWGQLLAIALY), 187 to 207 (LLLGTMIIVFGGVGMGYALAI), and 210 to 230 (WLILGATGSSALIAWAVGRWF).

This sequence belongs to the CobS family. Mg(2+) is required as a cofactor.

It is found in the cell inner membrane. It carries out the reaction alpha-ribazole + adenosylcob(III)inamide-GDP = adenosylcob(III)alamin + GMP + H(+). The catalysed reaction is alpha-ribazole 5'-phosphate + adenosylcob(III)inamide-GDP = adenosylcob(III)alamin 5'-phosphate + GMP + H(+). Its pathway is cofactor biosynthesis; adenosylcobalamin biosynthesis; adenosylcobalamin from cob(II)yrinate a,c-diamide: step 7/7. Functionally, joins adenosylcobinamide-GDP and alpha-ribazole to generate adenosylcobalamin (Ado-cobalamin). Also synthesizes adenosylcobalamin 5'-phosphate from adenosylcobinamide-GDP and alpha-ribazole 5'-phosphate. The chain is Adenosylcobinamide-GDP ribazoletransferase from Synechocystis sp. (strain ATCC 27184 / PCC 6803 / Kazusa).